The primary structure comprises 531 residues: Retinoid isomerohydrolase (531 aa).

Residue C112 is the site of S-palmitoyl cysteine; in membrane form attachment. Fe cation contacts are provided by H180, H241, and H313. Residue C329 is the site of S-palmitoyl cysteine; in membrane form attachment. H526 lines the Fe cation pocket.

It belongs to the carotenoid oxygenase family. Fe(2+) serves as cofactor. In terms of processing, palmitoylated. As to expression, retinal pigment epithelium-specific.

Its subcellular location is the cytoplasm. The protein resides in the cell membrane. It catalyses the reaction an all-trans-retinyl ester + H2O = 11-cis-retinol + a fatty acid + H(+). The enzyme catalyses lutein = (3R,3'S)-zeaxanthin. It carries out the reaction all-trans-retinyl hexadecanoate + H2O = 11-cis-retinol + hexadecanoate + H(+). Functionally, plays important roles in the production of 11-cis retinal and in visual pigment regeneration. Capable of catalyzing the isomerization of lutein to meso-zeaxanthin an eye-specific carotenoid. The protein is Retinoid isomerohydrolase (rpe65a) of Danio rerio (Zebrafish).